A 471-amino-acid polypeptide reads, in one-letter code: 3-isopropylmalate dehydratase large subunit (471 aa).

The [4Fe-4S] cluster site is built by cysteine 347, cysteine 407, and cysteine 410.

The protein belongs to the aconitase/IPM isomerase family. LeuC type 1 subfamily. As to quaternary structure, heterodimer of LeuC and LeuD. It depends on [4Fe-4S] cluster as a cofactor.

It catalyses the reaction (2R,3S)-3-isopropylmalate = (2S)-2-isopropylmalate. The protein operates within amino-acid biosynthesis; L-leucine biosynthesis; L-leucine from 3-methyl-2-oxobutanoate: step 2/4. Its function is as follows. Catalyzes the isomerization between 2-isopropylmalate and 3-isopropylmalate, via the formation of 2-isopropylmaleate. The sequence is that of 3-isopropylmalate dehydratase large subunit from Granulibacter bethesdensis (strain ATCC BAA-1260 / CGDNIH1).